The primary structure comprises 101 residues: NADH-quinone oxidoreductase subunit K (101 aa).

Helical transmembrane passes span 4-24 (LAHY…GIFL), 29-49 (IIII…NFVA), and 61-81 (IFVF…LAIL).

It belongs to the complex I subunit 4L family. NDH-1 is composed of 14 different subunits. Subunits NuoA, H, J, K, L, M, N constitute the membrane sector of the complex.

It localises to the cell inner membrane. The catalysed reaction is a quinone + NADH + 5 H(+)(in) = a quinol + NAD(+) + 4 H(+)(out). NDH-1 shuttles electrons from NADH, via FMN and iron-sulfur (Fe-S) centers, to quinones in the respiratory chain. The immediate electron acceptor for the enzyme in this species is believed to be ubiquinone. Couples the redox reaction to proton translocation (for every two electrons transferred, four hydrogen ions are translocated across the cytoplasmic membrane), and thus conserves the redox energy in a proton gradient. This is NADH-quinone oxidoreductase subunit K from Burkholderia ambifaria (strain MC40-6).